We begin with the raw amino-acid sequence, 171 residues long: UPF0763 protein HPP12_0677 (171 aa).

Belongs to the UPF0763 family.

In Helicobacter pylori (strain P12), this protein is UPF0763 protein HPP12_0677.